The primary structure comprises 421 residues: MAFRGIRPSNKVAASRPDVWTLVNQATAECKVPPVSLSQGFFNYNPPKFVLDAAKKSIDEVACNQYSHTRGRPSLRKALSEAYSPYFKRTLNPDTEIVVTAGANEGFFSVFAAFLNPGDEVIVMEPFFDQYISNITMNGGVPVYVPIIPPEEGSVKPVSAGAWKLDMNKLRNAITEKTKMIVINTPHNPLGKIFSEEELNEIADLVLKHNLLVVSDEVYDRLSFVPFVRLATLRPELFKHVVTVGSGGKTFGCTGWRVGWLIGDESLIKYSAAAHTRICFAVNSPCQEALAIAFGEAEKHNYYEEYKSSYKKRFEILAKAFDQLEIPYTIPDGSYYTMANFSKLKLPKDYPFPEEIANRPRDFKLCYWILKEIGVATIPPTEFYTDEDAPVAENYLRFAFCKTFETLEEAARRLQKLKDYF.

Lys249 carries the N6-(pyridoxal phosphate)lysine modification.

The protein belongs to the class-I pyridoxal-phosphate-dependent aminotransferase family. Requires pyridoxal 5'-phosphate as cofactor.

The protein resides in the cytoplasm. This is an uncharacterized protein from Schizosaccharomyces pombe (strain 972 / ATCC 24843) (Fission yeast).